The sequence spans 307 residues: MAASERNTGKFTEECPACGSAEIVFDEERGEYVCANCGLVTEDPVIDPGPEWRHFNPDQRQRRSRTGEPVKLRLPDKGISTIIDRELRDSGGKKNPRMRRIRTWDARIKVSGSRERNFFQAFLELENLASKLQLPESVRELAASIYRKAYKEGIVRGRGIESVLGAAVFAACKEARVPRTAREIAEALGVSDENEILRAYRVLQRRLNLKQKPTEPSDHLPRFASKLGVSENVQAKAQEIIEKAKEKGITVGKGPAGVAAAALYIASILEGERRTQKEIAEVARVTEVTIRNRYKEICEALGIELHP.

A TFIIB-type zinc finger spans residues 11–42 (FTEECPACGSAEIVFDEERGEYVCANCGLVTE). Zn(2+)-binding residues include cysteine 15, cysteine 18, cysteine 34, and cysteine 37. The interval 48 to 69 (PGPEWRHFNPDQRQRRSRTGEP) is disordered. The span at 50-69 (PEWRHFNPDQRQRRSRTGEP) shows a compositional bias: basic and acidic residues. 2 consecutive repeat copies span residues 123–207 (LELE…QRRL) and 218–299 (DHLP…EICE).

The protein belongs to the TFIIB family.

Its function is as follows. Stabilizes TBP binding to an archaeal box-A promoter. Also responsible for recruiting RNA polymerase II to the pre-initiation complex (DNA-TBP-TFIIB). The chain is Transcription initiation factor IIB from Methanopyrus kandleri (strain AV19 / DSM 6324 / JCM 9639 / NBRC 100938).